Reading from the N-terminus, the 298-residue chain is Cyclin-dependent kinase 2 (298 aa).

N-acetylmethionine is present on methionine 1. Positions 4–286 constitute a Protein kinase domain; sequence FQKVEKIGEG…AKAALAHPFF (283 aa). Lysine 6 carries the N6-acetyllysine modification. 10–18 provides a ligand contact to ATP; it reads IGEGTYGVV. Threonine 14 carries the post-translational modification Phosphothreonine. Phosphotyrosine; by WEE1 is present on tyrosine 15. At tyrosine 19 the chain carries Phosphotyrosine. Residues lysine 33, 81-83, and aspartate 86 contribute to the ATP site; that span reads EFL. The active-site Proton acceptor is the aspartate 127. ATP-binding positions include 129–132 and aspartate 145; that span reads KPQN. Positions 132 and 145 each coordinate Mg(2+). Phosphothreonine; by CAK and CCRK is present on threonine 160.

It belongs to the protein kinase superfamily. CMGC Ser/Thr protein kinase family. CDC2/CDKX subfamily. As to quaternary structure, found in a complex with CABLES1, CCNA1 and CCNE1. Interacts with CABLES1. Interacts with UHRF2. Part of a complex consisting of UHRF2, CDK2 and CCNE1. Interacts with the Speedy/Ringo proteins SPDYA and SPDYC. Interaction with SPDYA promotes kinase activation via a conformation change that alleviates obstruction of the substrate-binding cleft by the T-loop. Found in a complex with both SPDYA and CDKN1B/KIP1. Binds to RB1 and CDK7. Binding to CDKN1A (p21) leads to CDK2/cyclin E inactivation at the G1-S phase DNA damage checkpoint, thereby arresting cells at the G1-S transition during DNA repair. Associated with PTPN6 and beta-catenin/CTNNB1. Interacts with CACUL1. May interact with CEP63. Interacts with ANKRD17. Interacts with CEBPA (when phosphorylated). Forms a ternary complex with CCNA2 and CDKN1B; CDKN1B inhibits the kinase activity of CDK2 through conformational rearrangements. Interacts with cyclins A, B1, B3, D, or E. Interacts with CDK2AP2. Mg(2+) is required as a cofactor. In terms of processing, phosphorylated at Thr-160 by CDK7 in a CAK complex. Phosphorylation at Thr-160 promotes kinase activity, whereas phosphorylation at Tyr-15 by WEE1 reduces slightly kinase activity. Phosphorylated on Thr-14 and Tyr-15 during S and G2 phases before being dephosphorylated by CDC25A. Post-translationally, nitrosylated after treatment with nitric oxide (DETA-NO).

It localises to the cytoplasm. The protein localises to the cytoskeleton. It is found in the microtubule organizing center. Its subcellular location is the centrosome. The protein resides in the nucleus. It localises to the cajal body. The protein localises to the endosome. The enzyme catalyses L-seryl-[protein] + ATP = O-phospho-L-seryl-[protein] + ADP + H(+). It carries out the reaction L-threonyl-[protein] + ATP = O-phospho-L-threonyl-[protein] + ADP + H(+). Phosphorylation at Thr-14 or Tyr-15 inactivates the enzyme, while phosphorylation at Thr-160 activates it. Inhibited by 1,25-dihydroxyvitamin D(3) (1,25-(OH)(2)D(3)), AG-024322, N-(4-Piperidinyl)-4-(2,6-dichlorobenzoylamino)-1H-pyrazole-3-carboxamide (AT7519), R547 (Ro-4584820), purine, pyrimidine and pyridine derivatives, 2-aminopyrimidines, paullones, thiazo derivatives, macrocyclic quinoxalin-2-one, pyrazolo[1,5-a]-1,3,5-triazine, pyrazolo[1,5-a]pyrimidine, 2-(1-ethyl-2-hydroxyethylamino)-6-benzylamino-9-isopropylpurine (roscovitine, seliciclib and CYC202), SNS-032 (BMS-387032), triazolo[1,5-a]pyrimidines, staurosporine and olomoucine. Stimulated by MYC. Inactivated by CDKN1A (p21). Its function is as follows. Serine/threonine-protein kinase involved in the control of the cell cycle; essential for meiosis, but dispensable for mitosis. Phosphorylates CABLES1, CTNNB1, CDK2AP2, ERCC6, NBN, USP37, p53/TP53, NPM1, CDK7, RB1, BRCA2, MYC, NPAT, EZH2. Triggers duplication of centrosomes and DNA. Acts at the G1-S transition to promote the E2F transcriptional program and the initiation of DNA synthesis, and modulates G2 progression; controls the timing of entry into mitosis/meiosis by controlling the subsequent activation of cyclin B/CDK1 by phosphorylation, and coordinates the activation of cyclin B/CDK1 at the centrosome and in the nucleus. Crucial role in orchestrating a fine balance between cellular proliferation, cell death, and DNA repair in embryonic stem cells (ESCs). Activity of CDK2 is maximal during S phase and G2; activated by interaction with cyclin E during the early stages of DNA synthesis to permit G1-S transition, and subsequently activated by cyclin A2 (cyclin A1 in germ cells) during the late stages of DNA replication to drive the transition from S phase to mitosis, the G2 phase. EZH2 phosphorylation promotes H3K27me3 maintenance and epigenetic gene silencing. Cyclin E/CDK2 prevents oxidative stress-mediated Ras-induced senescence by phosphorylating MYC. Involved in G1-S phase DNA damage checkpoint that prevents cells with damaged DNA from initiating mitosis; regulates homologous recombination-dependent repair by phosphorylating BRCA2, this phosphorylation is low in S phase when recombination is active, but increases as cells progress towards mitosis. In response to DNA damage, double-strand break repair by homologous recombination a reduction of CDK2-mediated BRCA2 phosphorylation. Involved in regulation of telomere repair by mediating phosphorylation of NBN. Phosphorylation of RB1 disturbs its interaction with E2F1. NPM1 phosphorylation by cyclin E/CDK2 promotes its dissociates from unduplicated centrosomes, thus initiating centrosome duplication. Cyclin E/CDK2-mediated phosphorylation of NPAT at G1-S transition and until prophase stimulates the NPAT-mediated activation of histone gene transcription during S phase. Required for vitamin D-mediated growth inhibition by being itself inactivated. Involved in the nitric oxide- (NO) mediated signaling in a nitrosylation/activation-dependent manner. USP37 is activated by phosphorylation and thus triggers G1-S transition. CTNNB1 phosphorylation regulates insulin internalization. Phosphorylates FOXP3 and negatively regulates its transcriptional activity and protein stability. Phosphorylates ERCC6 which is essential for its chromatin remodeling activity at DNA double-strand breaks. Acts as a regulator of the phosphatidylinositol 3-kinase/protein kinase B signal transduction by mediating phosphorylation of the C-terminus of protein kinase B (PKB/AKT1 and PKB/AKT2), promoting its activation. The chain is Cyclin-dependent kinase 2 (CDK2) from Homo sapiens (Human).